The following is a 340-amino-acid chain: Ketol-acid reductoisomerase (NADP(+)) (340 aa).

Positions methionine 1 to threonine 182 constitute a KARI N-terminal Rossmann domain. NADP(+) contacts are provided by residues tyrosine 24–glutamine 27, arginine 48, serine 51, serine 53, and aspartate 83–glutamine 86. Residue histidine 108 is part of the active site. An NADP(+)-binding site is contributed by glycine 134. The region spanning asparagine 183–isoleucine 329 is the KARI C-terminal knotted domain. Mg(2+) contacts are provided by aspartate 191, glutamate 195, glutamate 227, and glutamate 231. Residue serine 252 coordinates substrate.

This sequence belongs to the ketol-acid reductoisomerase family. The cofactor is Mg(2+).

It catalyses the reaction (2R)-2,3-dihydroxy-3-methylbutanoate + NADP(+) = (2S)-2-acetolactate + NADPH + H(+). The enzyme catalyses (2R,3R)-2,3-dihydroxy-3-methylpentanoate + NADP(+) = (S)-2-ethyl-2-hydroxy-3-oxobutanoate + NADPH + H(+). It functions in the pathway amino-acid biosynthesis; L-isoleucine biosynthesis; L-isoleucine from 2-oxobutanoate: step 2/4. The protein operates within amino-acid biosynthesis; L-valine biosynthesis; L-valine from pyruvate: step 2/4. Its function is as follows. Involved in the biosynthesis of branched-chain amino acids (BCAA). Catalyzes an alkyl-migration followed by a ketol-acid reduction of (S)-2-acetolactate (S2AL) to yield (R)-2,3-dihydroxy-isovalerate. In the isomerase reaction, S2AL is rearranged via a Mg-dependent methyl migration to produce 3-hydroxy-3-methyl-2-ketobutyrate (HMKB). In the reductase reaction, this 2-ketoacid undergoes a metal-dependent reduction by NADPH to yield (R)-2,3-dihydroxy-isovalerate. The chain is Ketol-acid reductoisomerase (NADP(+)) from Cereibacter sphaeroides (strain ATCC 17023 / DSM 158 / JCM 6121 / CCUG 31486 / LMG 2827 / NBRC 12203 / NCIMB 8253 / ATH 2.4.1.) (Rhodobacter sphaeroides).